We begin with the raw amino-acid sequence, 76 residues long: Dermaseptin-S7 (76 aa).

A signal peptide spans 1 to 22 (MDILKKSLFLVLFLGLISLSFC). The propeptide occupies 23-45 (EEEKRENEDEEEQEDDEQSEEKR). A disordered region spans residues 25–45 (EKRENEDEEEQEDDEQSEEKR). Over residues 30–41 (EDEEEQEDDEQS) the composition is skewed to acidic residues. The residue at position 73 (Q73) is a Glutamine amide. Positions 75–76 (EQ) are excised as a propeptide.

Belongs to the frog skin active peptide (FSAP) family. Dermaseptin subfamily. As to expression, expressed by the skin glands.

It localises to the secreted. Functionally, antimicrobial peptide. In Phyllomedusa sauvagei (Sauvage's leaf frog), this protein is Dermaseptin-S7.